A 652-amino-acid chain; its full sequence is MNKRMNELVALLNRYATEYYTSDNPSVSDSEYDRLYRELVELETAYPEQVLADSPTHRVGGKVLDGFEKYSHQYPLYSLQDAFSREELDAFDARVRKEVAHPTYICELKIDGLSISLTYEKGILVAGVTRGDGSIGENITENLKRVKDIPLTLTEELDITVRGECYMPRASFDQVNQARQENGEPEFANPRNAAAGTLRQLDTAVVAKRNLATFLYQEASPSTRDSQEKGLKYLEQLGFVVNPKRILAENIDEIWNFIQEVGQERENLPYDIDGVVIKVNDLASQEELGFTVKAPKWAVAYKFPAEEKEAQLLSVDWTVGRTGVVTPTANLTPVQLAGTTVSRATLHNVDYIAEKDIRKDDTVIVYKAGDIIPAVLRVVESKRVSEEKLDIPTNCPSCNSDLLHFEDEVALRCINPRCPAQIMEGLIHFASRDAMNITGLGPSIVEKLFAANLVKDVADIYRLQEEDFLLLEGVKEKSAAKLYQAIQASKENSAEKLLFGLGIRHVGSKASQLLLQYFHSIENLYQADSEEVASIESLGGVIAKSLQTYFATEGSEILLRELKETGVNLDYKGQTVVADAALSGLTVVLTGKLERLKRSEAKSKLESLGAKVTGSVSKKTDLVVVGADAGSKLQKAQELGIQVRDEAWLESL.

NAD(+) contacts are provided by residues D29–D33, S78–L79, and E107. The N6-AMP-lysine intermediate role is filled by K109. NAD(+)-binding residues include R130, E164, K278, and K302. Zn(2+)-binding residues include C395, C398, C413, and C418. Positions V577–L652 constitute a BRCT domain.

The protein belongs to the NAD-dependent DNA ligase family. LigA subfamily. Mg(2+) serves as cofactor. Mn(2+) is required as a cofactor.

The enzyme catalyses NAD(+) + (deoxyribonucleotide)n-3'-hydroxyl + 5'-phospho-(deoxyribonucleotide)m = (deoxyribonucleotide)n+m + AMP + beta-nicotinamide D-nucleotide.. Its function is as follows. DNA ligase that catalyzes the formation of phosphodiester linkages between 5'-phosphoryl and 3'-hydroxyl groups in double-stranded DNA using NAD as a coenzyme and as the energy source for the reaction. It is essential for DNA replication and repair of damaged DNA. This Streptococcus pneumoniae (strain 70585) protein is DNA ligase.